The following is a 302-amino-acid chain: 5'-3' exonuclease (302 aa).

Positions 173-269 (IPKLIPDLLG…NITTKKIKML (97 aa)) constitute a 5'-3' exonuclease domain.

Functionally, 5'-3' exonuclease acting preferentially on double-stranded DNA. This is 5'-3' exonuclease (pol) from Buchnera aphidicola subsp. Baizongia pistaciae (strain Bp).